A 517-amino-acid chain; its full sequence is Cytochrome P450 monooxygenase calE (517 aa).

Asn-8 is a glycosylation site (N-linked (GlcNAc...) asparagine). A helical membrane pass occupies residues 14-34 (SLMHHYILIAILVASIIAMVV). Position 458 (Cys-458) interacts with heme.

The protein belongs to the cytochrome P450 family. Heme is required as a cofactor.

The protein localises to the membrane. It participates in secondary metabolite biosynthesis. Functionally, cytochrome P450 monooxygenase; part of the gene cluster that mediates the biosynthesis of calbistrin A and related compounds. Calbistrin A is a secondary metabolite with an interesting structure that was recently found to have bioactivity against leukemia cells. It consists of two polyketides linked by an ester bond: a bicyclic decalin containing polyketide and a linear 12 carbon dioic acid structure. The polyketide synthase calA is probably responsible for forming the decalin moiety. Because calA lacks a designated enoylreductase (ER) domain, the required activity is provided by the trans-enoyl reductase calK. Following release from the PKS, calF then probably catalyzes the oxidation and the subsequent Diels Alder cycloisomerization that lead to the formation of the decalin moiety. The decalin polyketide backbone includes two C-methyl groups, at C7 and C11 in backbone, of which the C7 position is probably methylated by the methyltransferase domain of calA. A candidate for adding the methyl group at C11, if not done by CalA, is the cluster methyltransferase calH. Several additional tailoring enzymes within the cluster could be involved in the modification of the decalin polyketide product. Those include the 3 cytochrome P450 monooxygenases CalE, CalG and CalL, of which one might be responsible for the introduction of the extra hydroxyl group attached to the backbone of the decalin moiety, at position C9 in the backbone, that allows for attachment of the linear moiety. One tailoring enzyme activity that is expected to be involved in biosynthesis of calbistrin is an acyltransferase for connecting the two polyketide synthase products, and which could be performed by the cluster acyltransferase calJ. The enzyme responsible for the biosynthesis of the linear moiety, probably a second PKS, has not been identified yet. The chain is Cytochrome P450 monooxygenase calE from Penicillium decumbens.